A 372-amino-acid polypeptide reads, in one-letter code: Protein phosphatase Mn(2+)-dependent 1K (372 aa).

Residues 1-29 (MLSTAFITLVRSGRNQVKKRVLLSSILLQ) constitute a mitochondrion transit peptide. The interval 46–61 (RCSRFDPDGSGQPATW) is critical for association with the BCKDH complex. Residues 94–346 (NVGCASLIGK…DNSTAVVVPF (253 aa)) enclose the PPM-type phosphatase domain. Aspartate 127 and glycine 128 together coordinate Mn(2+). Serine 248 is modified (phosphoserine). Residues aspartate 298 and aspartate 337 each contribute to the Mn(2+) site.

This sequence belongs to the PP2C family. Interacts with E1 and E2 components of the branched-chain alpha-ketoacid dehydrogenase (BCKDH) complex. Interacts with both BCKDHA and BCKDHB chains of the E1 subunit. Interacts with the 24-meric DBT/E2 core of the BCKD complex with a 1:1 stoichiometry; the N-terminal region (residues 49-61) of PPM1K and C-terminal linker of the lipoyl domain of DBT/E2 (residues 145-160) are critical for this interaction whereas the lipoyl prosthetic group is dispensable. Competes with BCKDK for binding to DBT/E2; this interaction is modulated by branched-chain alpha-keto acids (BCKAs). At steady state, BCKDH holoenzyme preferentially binds BCKDK and BCKDHA/E1 is phosphorylated. In response to high levels of BCKAs, BCKDK is replaced by PPM1K leading to BCKDHA/E1 dephosphorylation. Mn(2+) is required as a cofactor.

It is found in the mitochondrion matrix. The enzyme catalyses O-phospho-L-seryl-[3-methyl-2-oxobutanoate dehydrogenase] + H2O = L-seryl-[3-methyl-2-oxobutanoate dehydrogenase] + phosphate. It catalyses the reaction O-phospho-L-seryl-[protein] + H2O = L-seryl-[protein] + phosphate. It participates in protein modification. Serine/threonine-protein phosphatase component of macronutrients metabolism. Together with BCKDK serves as a metabolic regulatory node that coordinates branched-chain amino acids (BCAAs) and protein synthesis with glucose and lipid metabolism via two distinct phosphoprotein targets: BCKDHA/E1a subunit of the branched-chain alpha-ketoacid dehydrogenase (BCKDH) complex and ACLY, a lipogenic enzyme of Krebs cycle. At high levels of branched-chain ketoacids (BCKAs), dephosphorylates and activates mitochondrial BCKDH complex, a multisubunit complex consisting of three components, heterotetrameric E1 composed of BCKDHA and BCKDHB chains, 24-meric E2 core composed of DBT and homodimeric E3 composed of DLD, each involved in different steps of BCAA catabolism. Tightly associates with the E2 subunit of BCKDH complex and dephosphorylates Ser-333 of BCKDHA chain of the E1 subunit likely through on-off binding to individual E2 subunits of the 24-meric E2 core to increase the efficiency of the dephosphorylation reaction. Appears to dephosphorylate and inactivate cytosolic ACLY in response to changes of cellular carbohydrate abundance. Overnutrition and in particular high-fructose diet, activates MLXIPL/ChREBP leading to increased BCKDK to PPM1K ratio, phosphorylation of ACLY on Ser-454 and activation of its enzymatic activity that ultimately results in the generation of acetyl-CoA and malonyl-CoA immediate substrates of de novo lipogenesis. Recognizes phosphosites having SxS or RxxS motifs and strictly depends on Mn(2+) ions for the phosphatase activity. Regulates Ca(2+)-induced opening of mitochondrial transition pore and apoptotic cell death. The chain is Protein phosphatase Mn(2+)-dependent 1K (Ppm1k) from Rattus norvegicus (Rat).